Consider the following 919-residue polypeptide: Alanine--tRNA ligase (919 aa).

The Zn(2+) site is built by His565, His569, Cys667, and His671.

Belongs to the class-II aminoacyl-tRNA synthetase family. It depends on Zn(2+) as a cofactor.

It localises to the cytoplasm. The catalysed reaction is tRNA(Ala) + L-alanine + ATP = L-alanyl-tRNA(Ala) + AMP + diphosphate. Catalyzes the attachment of alanine to tRNA(Ala) in a two-step reaction: alanine is first activated by ATP to form Ala-AMP and then transferred to the acceptor end of tRNA(Ala). Also edits incorrectly charged Ser-tRNA(Ala) and Gly-tRNA(Ala) via its editing domain. The sequence is that of Alanine--tRNA ligase from Leptospira biflexa serovar Patoc (strain Patoc 1 / Ames).